The sequence spans 623 residues: V-type proton ATPase catalytic subunit A (623 aa).

Gly252 to Thr259 is an ATP binding site.

The protein belongs to the ATPase alpha/beta chains family. In terms of assembly, V-ATPase is a heteromultimeric enzyme composed of a peripheral catalytic V1 complex (main components: subunits A, B, C, D, E, and F) attached to an integral membrane V0 proton pore complex (main component: the proteolipid protein).

The enzyme catalyses ATP + H2O + 4 H(+)(in) = ADP + phosphate + 5 H(+)(out). Functionally, catalytic subunit of the peripheral V1 complex of vacuolar ATPase. V-ATPase vacuolar ATPase is responsible for acidifying a variety of intracellular compartments in eukaryotic cells. In Daucus carota (Wild carrot), this protein is V-type proton ATPase catalytic subunit A.